We begin with the raw amino-acid sequence, 404 residues long: Serine/threonine transporter SstT (404 aa).

A run of 8 helical transmembrane segments spans residues 17-37 (IGIG…LTGF), 39-59 (ILGK…VFAL), 75-95 (MTLI…VAVL), 138-158 (ALAT…GLAL), 179-199 (IVVW…FTTI), 212-232 (FLIL…NPLI), 287-307 (IPLG…VLTL), and 313-333 (FGIP…AVSA).

Belongs to the dicarboxylate/amino acid:cation symporter (DAACS) (TC 2.A.23) family.

It localises to the cell membrane. It catalyses the reaction L-serine(in) + Na(+)(in) = L-serine(out) + Na(+)(out). It carries out the reaction L-threonine(in) + Na(+)(in) = L-threonine(out) + Na(+)(out). In terms of biological role, involved in the import of serine and threonine into the cell, with the concomitant import of sodium (symport system). This is Serine/threonine transporter SstT from Streptococcus pyogenes serotype M12 (strain MGAS2096).